Consider the following 271-residue polypeptide: Type III pantothenate kinase (271 aa).

6–13 serves as a coordination point for ATP; that stretch reads DVRNTNIV. Residue 109–112 coordinates substrate; that stretch reads GADR. Catalysis depends on Asp111, which acts as the Proton acceptor. Asp131 is a K(+) binding site. Thr134 provides a ligand contact to ATP. Thr186 contributes to the substrate binding site.

The protein belongs to the type III pantothenate kinase family. In terms of assembly, homodimer. The cofactor is NH4(+). Requires K(+) as cofactor.

The protein localises to the cytoplasm. It carries out the reaction (R)-pantothenate + ATP = (R)-4'-phosphopantothenate + ADP + H(+). It participates in cofactor biosynthesis; coenzyme A biosynthesis; CoA from (R)-pantothenate: step 1/5. Functionally, catalyzes the phosphorylation of pantothenate (Pan), the first step in CoA biosynthesis. The sequence is that of Type III pantothenate kinase from Rhodococcus opacus (strain B4).